We begin with the raw amino-acid sequence, 500 residues long: MAKDKDITETLLTAAEERSDLPFLSVDDIPPITTVGGFVREFNVETKKLWYLAGPAIFTSVNQYSLGAITQVFAGHISTIALAAVSVENSVVAGFSFGIMLGMGSALETLCGQAFGAGKLSMLGVYLQRSWVILNVTALILSLLYIFAAPILASIGQTAAISSAAGIFSIYMIPQIFAYAINFPTAKFLQSQSKIMVMAVISAVALVIHVPLTWFVIVKLQWGMPGLAVVLNASWCFIDMAQLVYIFSGTCGEAWSGFSWEAFHNLWSFVRLSLASAVMLCLEVWYFMAIILFAGYLKNAEISVAALSICMNILGWTAMIAIGMNTAVSVRVSNELGANHPRTAKFSLLVAVITSTLIGFIVSMILLIFRDQYPSLFVKDEKVIILVKELTPILALSIVINNVQPVLSGVAVGAGWQAVVAYVNIACYYVFGIPFGLLLGYKLNYGVMGIWCGMLTGTVVQTIVLTWMICKTNWDTEASMAEDRIREWGGEVSEIKQLIN.

12 consecutive transmembrane segments (helical) span residues 67–87 (GAIT…AVSV), 91–111 (VVAG…ETLC), 132–152 (VILN…APIL), 161–181 (ISSA…AYAI), 197–217 (VMAV…WFVI), 227–247 (LAVV…VYIF), 277–297 (AVML…AGYL), 302–322 (ISVA…MIAI), 349–369 (LVAV…LLIF), 393–413 (ILAL…VAVG), 419–439 (VVAY…GLLL), and 449–469 (GIWC…TWMI).

The protein belongs to the multi antimicrobial extrusion (MATE) (TC 2.A.66.1) family.

Its subcellular location is the vacuole membrane. This Arabidopsis thaliana (Mouse-ear cress) protein is Protein DETOXIFICATION 29.